A 441-amino-acid polypeptide reads, in one-letter code: Lysine histidine transporter 2 (441 aa).

Residues 1–32 are Cytoplasmic-facing; sequence MGNSEMSASEVAAAKQKNVDDWLPITSSRNAK. A helical transmembrane segment spans residues 33 to 53; sequence WWYSAFHNVTAMVGAGVLSLP. Over 54 to 58 the chain is Extracellular; it reads YAMSN. The chain crosses the membrane as a helical span at residues 59–79; that stretch reads LGWGPGVTIMVMSWIITLYTL. Topologically, residues 80–110 are cytoplasmic; sequence WQMVEMHEIVPGKRLDRYHELGQHAFGEKLG. A helical membrane pass occupies residues 111 to 131; the sequence is LWIVVPQQLIVEVGVDIVYMV. At 132–152 the chain is on the extracellular side; that stretch reads TGGASLKKVHQLVCPDCKEIR. A helical membrane pass occupies residues 153 to 173; it reads TTFWIMIFASVHFVISHLPNF. The Cytoplasmic segment spans residues 174 to 175; it reads NS. A helical transmembrane segment spans residues 176 to 196; that stretch reads ISIISLAAAVMSLTYSTIAWA. The Extracellular segment spans residues 197–222; it reads ASVHKGVHPDVDYSPRASTDVGKVFN. A helical membrane pass occupies residues 223–243; sequence FLNALGDVAFAYAGHNVVLEI. Residues 244–263 are Cytoplasmic-facing; that stretch reads QATIPSTPEMPSKVPMWRGV. Residues 264–284 form a helical membrane-spanning segment; that stretch reads IVAYIVVAICYFPVAFLGYYI. Residues 285 to 300 are Extracellular-facing; that stretch reads FGNSVDDNILITLEKP. The chain crosses the membrane as a helical span at residues 301–321; that stretch reads IWLIAMANMFVVIHVIGSYQI. At 322 to 347 the chain is on the cytoplasmic side; sequence FAMPVFDMLETVLVKKMNFNPSFKLR. Residues 348–370 form a helical membrane-spanning segment; it reads FITRSLYVAFTMIVAICVPFFGG. Residues 371-373 lie on the Extracellular side of the membrane; that stretch reads LLG. Residues 374-396 form a helical membrane-spanning segment; it reads FFGGFAFAPTTYYLPCIMWLVLK. At 397–406 the chain is on the cytoplasmic side; sequence KPKRFGLSWT. The helical transmembrane segment at 407 to 427 threads the bilayer; that stretch reads ANWFCIIVGVLLTILAPIGGL. Residues 428–441 lie on the Extracellular side of the membrane; sequence RTIIINAKTYKFFS.

Belongs to the amino acid/polyamine transporter 2 family. Amino acid/auxin permease (AAAP) (TC 2.A.18.2) subfamily. As to expression, expressed in flower buds and to lower levels in leaves and stems. Not detected in roots and siliques. Restricted to the tapetum cell layer.

Its subcellular location is the cell membrane. Inhibited by diethylstibestrol (DES), 2,4-dinitrophenol (DNP) and carbonlycyanide m-chlorophenylhydrazone (CCCP). Functionally, amino acid-proton symporter. Transporter with a broad specificity for neutral and acidic amino acids. Basic amino acids are only marginally transported. Involved in import of amino acids into the tapetum cells for synthesis of compounds important for microspore structure. The protein is Lysine histidine transporter 2 (LHT2) of Arabidopsis thaliana (Mouse-ear cress).